A 351-amino-acid polypeptide reads, in one-letter code: Ferrochelatase (351 aa).

Residues His-221 and Glu-302 each contribute to the Fe cation site.

The protein belongs to the ferrochelatase family.

Its subcellular location is the cytoplasm. The catalysed reaction is heme b + 2 H(+) = protoporphyrin IX + Fe(2+). Its pathway is porphyrin-containing compound metabolism; protoheme biosynthesis; protoheme from protoporphyrin-IX: step 1/1. Catalyzes the ferrous insertion into protoporphyrin IX. The sequence is that of Ferrochelatase from Bradyrhizobium sp. (strain BTAi1 / ATCC BAA-1182).